The primary structure comprises 143 residues: MSEIITVKRLFSDAKIPVRHSEGAAAYDLYAYEDTVVAPNERKVIATGVRITVPLSCQGTIYSRSGLALKYCIEIFGVNIGPGETKDIVVDIYNHGKMPFNVAKGDRIAQIVFIKLFGGDLHEVSELSDTKRGSCGWGSTGIS.

The dUMP site is built by Ser-65, Val-78, Arg-132, and Gly-138.

It belongs to the dUTPase family. Homotrimer. Mg(2+) serves as cofactor.

The enzyme catalyses dUTP + H2O = dUMP + diphosphate + H(+). It functions in the pathway pyrimidine metabolism; dUMP biosynthesis; dUMP from dCTP (dUTP route): step 2/2. Its function is as follows. Involved in nucleotide metabolism via production of dUMP, the immediate precursor of thymidine nucleotides, and decreases the intracellular concentration of dUTP so that uracil cannot be incorporated into DNA. This Antonospora locustae (Microsporidian parasite) protein is Deoxyuridine 5'-triphosphate nucleotidohydrolase (DUT1).